Here is a 181-residue protein sequence, read N- to C-terminus: Putative manganese efflux pump MntP (181 aa).

The next 6 helical transmembrane spans lie at 3 to 23 (LIFLSIALAMDSVAISMANGA), 42 to 62 (IFQAFMPVIGYFLGLAFVGFI), 63 to 83 (SYIDHYVAFAILLFLGIKMIK), 101 to 121 (LMLGAFATSLDALAVGITFSF), 124 to 144 (INIAIAAFVIGLVCFVLCVIA), and 160 to 180 (LVLGGVILILIGCKIIITHLI).

Belongs to the MntP (TC 9.B.29) family.

It localises to the cell inner membrane. Its function is as follows. Probably functions as a manganese efflux pump. The chain is Putative manganese efflux pump MntP from Campylobacter fetus subsp. fetus (strain 82-40).